The following is a 273-amino-acid chain: 4-hydroxy-tetrahydrodipicolinate reductase (273 aa).

NAD(+) contacts are provided by residues 8–13, D35, 103–105, and 129–132; these read GALGRM, GTT, and SQNY. The Proton donor/acceptor role is filled by H161. Position 162 (H162) interacts with (S)-2,3,4,5-tetrahydrodipicolinate. The active-site Proton donor is the K165. 171 to 172 is a (S)-2,3,4,5-tetrahydrodipicolinate binding site; the sequence is GT.

This sequence belongs to the DapB family.

Its subcellular location is the cytoplasm. It catalyses the reaction (S)-2,3,4,5-tetrahydrodipicolinate + NAD(+) + H2O = (2S,4S)-4-hydroxy-2,3,4,5-tetrahydrodipicolinate + NADH + H(+). The catalysed reaction is (S)-2,3,4,5-tetrahydrodipicolinate + NADP(+) + H2O = (2S,4S)-4-hydroxy-2,3,4,5-tetrahydrodipicolinate + NADPH + H(+). The protein operates within amino-acid biosynthesis; L-lysine biosynthesis via DAP pathway; (S)-tetrahydrodipicolinate from L-aspartate: step 4/4. Catalyzes the conversion of 4-hydroxy-tetrahydrodipicolinate (HTPA) to tetrahydrodipicolinate. The polypeptide is 4-hydroxy-tetrahydrodipicolinate reductase (Methanococcus aeolicus (strain ATCC BAA-1280 / DSM 17508 / OCM 812 / Nankai-3)).